Here is a 122-residue protein sequence, read N- to C-terminus: Large ribosomal subunit protein uL14 (122 aa).

This sequence belongs to the universal ribosomal protein uL14 family. In terms of assembly, part of the 50S ribosomal subunit. Forms a cluster with proteins L3 and L19. In the 70S ribosome, L14 and L19 interact and together make contacts with the 16S rRNA in bridges B5 and B8.

In terms of biological role, binds to 23S rRNA. Forms part of two intersubunit bridges in the 70S ribosome. The sequence is that of Large ribosomal subunit protein uL14 from Teredinibacter turnerae (strain ATCC 39867 / T7901).